Consider the following 592-residue polypeptide: Signal peptide peptidase-like 2B (592 aa).

A signal peptide spans 1-25; that stretch reads MAAAVAAALARLLAAFLLLAAQVAC. Over 26–174 the chain is Lumenal; it reads EYGMVHVVSQ…APKEPVLDYN (149 aa). Positions 71-149 constitute a PA domain; that stretch reads TASLLCSAAD…VALLSYKDML (79 aa). N-linked (GlcNAc...) asparagine glycosylation is found at Asn97 and Asn129. Residues 175–195 form a helical membrane-spanning segment; it reads MVIIFIMAVGTVAIGGYWAGS. At 196-221 the chain is on the cytoplasmic side; the sequence is RDVKKRYMKHKRDDGPEKQEDEAVDV. The chain crosses the membrane as a helical span at residues 222–244; sequence TPVMTCVFVVMCCSMLVLLYYFY. The Lumenal portion of the chain corresponds to 245-248; the sequence is DLLV. The chain crosses the membrane as a helical span at residues 249-271; that stretch reads YVVIGIFCLASATGLYSCLAPCV. The Cytoplasmic portion of the chain corresponds to 272–293; sequence RRLPFGKCRIPNNSLPYFHKRP. The chain crosses the membrane as a helical span at residues 294-314; sequence QARMLLLALFCVAVSVVWGVF. The Lumenal segment spans residues 315–319; it reads RNEDQ. A helical membrane pass occupies residues 320 to 340; that stretch reads WAWVLQDALGIAFCLYMLKTI. Over 341-348 the chain is Cytoplasmic; the sequence is RLPTFKAC. A helical membrane pass occupies residues 349 to 369; sequence TLLLLVLFLYDIFFVFITPFL. Asp359 is a catalytic residue. Topologically, residues 370–412 are lumenal; sequence TKSGSSIMVEVATGPSDSATREKLPMVLKVPRLNSSPLALCDR. A helical membrane pass occupies residues 413–433; it reads PFSLLGFGDILVPGLLVAYCH. Asp421 is an active-site residue. Residues 434–445 lie on the Cytoplasmic side of the membrane; sequence RFDIQVQSSRVY. A helical membrane pass occupies residues 446-466; sequence FVACTIAYGVGLLVTFVALAL. Residues 467-470 are Lumenal-facing; it reads MQRG. Residues 471–491 traverse the membrane as a helical segment; the sequence is QPALLYLVPCTLVTSCAVALW. Positions 472 to 474 match the PAL motif; sequence PAL. The Cytoplasmic segment spans residues 492-592; it reads RRELGVFWTG…SPVTQPGASA (101 aa). Pro residues predominate over residues 512–524; sequence PWAPAPADGPQPP. Residues 512-592 are disordered; that stretch reads PWAPAPADGP…SPVTQPGASA (81 aa). The segment covering 580 to 592 has biased composition (polar residues); that stretch reads AQPSPVTQPGASA.

This sequence belongs to the peptidase A22B family. Monomer. Homodimer. Interacts with ITM2B. Interacts with TNF. Interacts with the simian foamy virus envelope glycoprotein gp130 and its processed leader peptide gp18LP; preferentially interacts with the leader peptide gp18LP. In terms of processing, glycosylated. In terms of tissue distribution, expressed predominantly in adrenal cortex and mammary gland.

Its subcellular location is the cell membrane. The protein localises to the golgi apparatus membrane. The protein resides in the lysosome membrane. It localises to the endosome membrane. It is found in the membrane. Functionally, intramembrane-cleaving aspartic protease (I-CLiP) that cleaves type II membrane signal peptides in the hydrophobic plane of the membrane. Functions in ITM2B and TNF processing. Catalyzes the intramembrane cleavage of the anchored fragment of shed TNF-alpha (TNF), which promotes the release of the intracellular domain (ICD) for signaling to the nucleus. May play a role in the regulation of innate and adaptive immunity. Catalyzes the intramembrane cleavage of the simian foamy virus processed leader peptide gp18 of the envelope glycoprotein gp130 dependently of prior ectodomain shedding by furin or furin-like proprotein convertase (PC)-mediated cleavage proteolysis. The chain is Signal peptide peptidase-like 2B from Homo sapiens (Human).